Consider the following 262-residue polypeptide: Short-chain Z-isoprenyl diphosphate synthase (262 aa).

Asp40 is a catalytic residue. A Mg(2+)-binding site is contributed by Asp40. Substrate-binding positions include 41–44 (GNRR), Trp45, and 86–88 (STE). Asn89 functions as the Proton acceptor in the catalytic mechanism. Residues Arg92, Arg211, and 217 to 219 (RLS) each bind substrate. Glu230 lines the Mg(2+) pocket.

It belongs to the UPP synthase family. Z-FPP synthase subfamily. The cofactor is Mg(2+).

It catalyses the reaction isopentenyl diphosphate + (2E)-geranyl diphosphate = (2Z,6E)-farnesyl diphosphate + diphosphate. It functions in the pathway phospholipid metabolism; decaprenyl phosphate biosynthesis. Its function is as follows. Generates Z-farnesyl diphosphate (Z-FPP) from isopentenyl pyrophosphate (IPP). Z-FPP is the precursor of decaprenyl diphosphate, which has a central role in the biosynthesis of the mycobacterial cell wall. The chain is Short-chain Z-isoprenyl diphosphate synthase from Mycobacterium leprae (strain TN).